The chain runs to 176 residues: Protein MAL2 (176 aa).

The Cytoplasmic portion of the chain corresponds to 1–34 (MSAGGASVPPPPNPAVSFPPPRVTLPAGPDILRT). The MARVEL domain maps to 31–175 (ILRTYSGAFV…SLGLALRRWR (145 aa)). Residues 35 to 55 (YSGAFVCLEILFGGLVWILVA) traverse the membrane as a helical segment. Topologically, residues 56–66 (SSNVPLPLLQG) are lumenal. Residues 67-87 (WVMFVSVTAFFFSLLFLGMFL) form a helical membrane-spanning segment. The Cytoplasmic segment spans residues 88–102 (SGMVAQIDANWNFLD). The helical transmembrane segment at 103–123 (FAYHFTVFVFYFGAFLLEAAA) threads the bilayer. Topologically, residues 124–149 (TSLHDLHCNTTITGQPLLSDNQYNIN) are lumenal. Asn132 carries an N-linked (GlcNAc...) asparagine glycan. A helical membrane pass occupies residues 150–170 (VAASIFAFMTTACYGCSLGLA). Residues 171 to 176 (LRRWRP) lie on the Cytoplasmic side of the membrane.

Belongs to the MAL family. Interacts with TPD52L2. Predominantly expressed in kidney, lung, and liver. Also found in thyroid gland, stomach and, at lower levels in testis and small intestine.

Its subcellular location is the cell membrane. The protein resides in the apical cell membrane. The protein localises to the endomembrane system. It localises to the cytoplasm. It is found in the perinuclear region. Functionally, member of the machinery of polarized transport. Required for the indirect transcytotic route at the step of the egress of the transcytosing cargo from perinuclear endosomes in order for it to travel to the apical surface via a raft-dependent pathway. The chain is Protein MAL2 (MAL2) from Homo sapiens (Human).